Consider the following 156-residue polypeptide: uncharacterized protein (156 aa).

The protein resides in the mitochondrion. This is an uncharacterized protein from Paramecium tetraurelia.